Reading from the N-terminus, the 83-residue chain is Protein kreg-1 (83 aa).

Positions 62–83 (GHHHHHHGHHFGHHHHHHHGHH) are disordered.

As to expression, weakly expressed in the intestine, but expression is up-regulated in response to Cu(2+).

In terms of biological role, plays a role in the stress response to heavy metals such as copper, probably in a fos-1/kgb-1-dependent manner. This Caenorhabditis elegans protein is Protein kreg-1.